Consider the following 371-residue polypeptide: Heterodimeric geranylgeranyl pyrophosphate synthase large subunit 1, chloroplastic (371 aa).

A chloroplast-targeting transit peptide spans 1–51; that stretch reads MASVTLGSWIVVHHHNHHHPSSILTKSRSRSCPITLTKPISFRSKRTVSSS. The residue at position 52 (Ser-52) is an N-acetylserine. Residues Lys-116, Arg-119, and His-148 each coordinate isopentenyl diphosphate. Mg(2+) contacts are provided by Asp-155 and Asp-161. Arg-166 is a binding site for dimethylallyl diphosphate. Residue Arg-167 participates in isopentenyl diphosphate binding. Lys-256, Thr-257, Gln-294, Lys-311, and Lys-321 together coordinate dimethylallyl diphosphate.

The protein belongs to the FPP/GGPP synthase family. Forms homodimers. Part of a heterodimeric geranyl(geranyl)diphosphate synthase. Interacts with GGR. The cofactor is Mg(2+). As to expression, expressed ubiquitously.

The protein localises to the plastid. It localises to the chloroplast. The protein resides in the cytoplasm. It catalyses the reaction isopentenyl diphosphate + dimethylallyl diphosphate = (2E)-geranyl diphosphate + diphosphate. It carries out the reaction isopentenyl diphosphate + (2E)-geranyl diphosphate = (2E,6E)-farnesyl diphosphate + diphosphate. The catalysed reaction is isopentenyl diphosphate + (2E,6E)-farnesyl diphosphate = (2E,6E,10E)-geranylgeranyl diphosphate + diphosphate. The protein operates within isoprenoid biosynthesis; farnesyl diphosphate biosynthesis; farnesyl diphosphate from geranyl diphosphate and isopentenyl diphosphate: step 1/1. Its pathway is isoprenoid biosynthesis; geranyl diphosphate biosynthesis; geranyl diphosphate from dimethylallyl diphosphate and isopentenyl diphosphate: step 1/1. It participates in isoprenoid biosynthesis; geranylgeranyl diphosphate biosynthesis; geranylgeranyl diphosphate from farnesyl diphosphate and isopentenyl diphosphate: step 1/1. Its function is as follows. Heterodimeric geranyl(geranyl)-diphosphate (GPP) synthase large subunit. In vitro, the large subunit catalyzes mainly the trans-addition of the three molecules of IPP onto DMAPP to form geranylgeranyl pyrophosphate while the small subunit alone is inactive. Upon association of the two subunits, the product profile changes and the production of gerany-diphosphate is strongly increased. The chain is Heterodimeric geranylgeranyl pyrophosphate synthase large subunit 1, chloroplastic (GGPPS1) from Arabidopsis thaliana (Mouse-ear cress).